Reading from the N-terminus, the 555-residue chain is Urocanate hydratase (555 aa).

NAD(+) is bound by residues 52–53, glutamine 130, 176–178, glutamate 196, arginine 201, 242–243, 263–267, 273–274, and tyrosine 322; these read GG, GMG, NA, QTSAH, and YL. Residue cysteine 410 is part of the active site. Glycine 492 contacts NAD(+).

The protein belongs to the urocanase family. NAD(+) is required as a cofactor.

The protein localises to the cytoplasm. It carries out the reaction 4-imidazolone-5-propanoate = trans-urocanate + H2O. It functions in the pathway amino-acid degradation; L-histidine degradation into L-glutamate; N-formimidoyl-L-glutamate from L-histidine: step 2/3. Its function is as follows. Catalyzes the conversion of urocanate to 4-imidazolone-5-propionate. The polypeptide is Urocanate hydratase (Shewanella baltica (strain OS185)).